The sequence spans 585 residues: 2-succinyl-5-enolpyruvyl-6-hydroxy-3-cyclohexene-1-carboxylate synthase (585 aa).

This sequence belongs to the TPP enzyme family. MenD subfamily. In terms of assembly, homodimer. Mg(2+) serves as cofactor. Requires Mn(2+) as cofactor. Thiamine diphosphate is required as a cofactor.

It carries out the reaction isochorismate + 2-oxoglutarate + H(+) = 5-enolpyruvoyl-6-hydroxy-2-succinyl-cyclohex-3-ene-1-carboxylate + CO2. Its pathway is quinol/quinone metabolism; 1,4-dihydroxy-2-naphthoate biosynthesis; 1,4-dihydroxy-2-naphthoate from chorismate: step 2/7. It participates in cofactor biosynthesis; phylloquinone biosynthesis. Functionally, catalyzes the thiamine diphosphate-dependent decarboxylation of 2-oxoglutarate and the subsequent addition of the resulting succinic semialdehyde-thiamine pyrophosphate anion to isochorismate to yield 2-succinyl-5-enolpyruvyl-6-hydroxy-3-cyclohexene-1-carboxylate (SEPHCHC). The protein is 2-succinyl-5-enolpyruvyl-6-hydroxy-3-cyclohexene-1-carboxylate synthase of Crocosphaera subtropica (strain ATCC 51142 / BH68) (Cyanothece sp. (strain ATCC 51142)).